Consider the following 352-residue polypeptide: tRNA uridine(34) hydroxylase (352 aa).

One can recognise a Rhodanese domain in the interval 146-240; that stretch reads DNPDTLFVDM…YARKAREQGL (95 aa). Catalysis depends on Cys-200, which acts as the Cysteine persulfide intermediate. Over residues 315–328 the composition is skewed to basic and acidic residues; that stretch reads ETEQRARRAGRENG. Residues 315–352 are disordered; that stretch reads ETEQRARRAGRENGAKIFNKSRHRLQDGLNSTSLQSVE. Residues 342–352 are compositionally biased toward polar residues; it reads GLNSTSLQSVE.

This sequence belongs to the TrhO family.

It carries out the reaction uridine(34) in tRNA + AH2 + O2 = 5-hydroxyuridine(34) in tRNA + A + H2O. Functionally, catalyzes oxygen-dependent 5-hydroxyuridine (ho5U) modification at position 34 in tRNAs. This is tRNA uridine(34) hydroxylase from Photorhabdus laumondii subsp. laumondii (strain DSM 15139 / CIP 105565 / TT01) (Photorhabdus luminescens subsp. laumondii).